The sequence spans 885 residues: Leucine--tRNA ligase (885 aa).

The 'HIGH' region signature appears at proline 48–histidine 58. The 'KMSKS' region motif lies at threonine 639 to serine 643. Lysine 642 serves as a coordination point for ATP.

It belongs to the class-I aminoacyl-tRNA synthetase family.

The protein resides in the cytoplasm. It carries out the reaction tRNA(Leu) + L-leucine + ATP = L-leucyl-tRNA(Leu) + AMP + diphosphate. The chain is Leucine--tRNA ligase from Bordetella avium (strain 197N).